The sequence spans 302 residues: ATP synthase gamma chain (302 aa).

The protein belongs to the ATPase gamma chain family. In terms of assembly, F-type ATPases have 2 components, CF(1) - the catalytic core - and CF(0) - the membrane proton channel. CF(1) has five subunits: alpha(3), beta(3), gamma(1), delta(1), epsilon(1). CF(0) has three main subunits: a, b and c.

Its subcellular location is the cell membrane. Produces ATP from ADP in the presence of a proton gradient across the membrane. The gamma chain is believed to be important in regulating ATPase activity and the flow of protons through the CF(0) complex. The protein is ATP synthase gamma chain of Leuconostoc citreum (strain KM20).